The chain runs to 98 residues: uncharacterized protein (98 aa).

2 consecutive transmembrane segments (helical) span residues 14–34 (FLVILCMVAFLAGCTQSPVTA) and 41–61 (MTGAQPVLIWLLISSIIASII).

It is found in the cell membrane. This is an uncharacterized protein from Haemophilus influenzae (strain ATCC 51907 / DSM 11121 / KW20 / Rd).